The chain runs to 161 residues: Allophycocyanin beta chain (161 aa).

N71 is subject to N4-methylasparagine. A (2R,3E)-phycocyanobilin-binding site is contributed by C81.

This sequence belongs to the phycobiliprotein family. Heterodimer of an alpha and a beta chain. Post-translationally, contains one covalently linked phycocyanobilin chromophore.

It localises to the cellular thylakoid membrane. Its function is as follows. Light-harvesting photosynthetic bile pigment-protein from the phycobiliprotein complex. Allophycocyanin has a maximum absorption at approximately 650 nanometers. This Synechocystis sp. (strain PCC 6714) (Aphanocapsa sp. (strain PCC 6714)) protein is Allophycocyanin beta chain (apcB).